We begin with the raw amino-acid sequence, 134 residues long: Retinol-binding protein 2 (134 aa).

All-trans-retinol contacts are provided by Lys41 and Gln109.

The protein belongs to the calycin superfamily. Fatty-acid binding protein (FABP) family. In terms of tissue distribution, expressed in prenatal liver, intestine and lung, and in adult intestine.

It is found in the cytoplasm. Its function is as follows. Intracellular transport of retinol. This is Retinol-binding protein 2 (Rbp2) from Mus musculus (Mouse).